The primary structure comprises 913 residues: Epithelial discoidin domain-containing receptor 1 (913 aa).

Positions 1–18 (MGPEALSSLLLLLLVASG) are cleaved as a signal peptide. The Extracellular segment spans residues 21–417 (DMKGHFDPAK…VAKAEGSPTA (397 aa)). Residues 31–185 (CRYALGMQDR…VCLRVELYGC (155 aa)) form the F5/8 type C domain. Intrachain disulfides connect C31-C185 and C74-C177. Positions 192–367 (LSYTAPVGQT…LFSEISFISD (176 aa)) are DS-like domain. Residues N211, Q230, D233, V235, Y253, and Y255 each contribute to the Ca(2+) site. N211 carries N-linked (GlcNAc...) asparagine glycosylation. N260 is a glycosylation site (N-linked (GlcNAc...) asparagine). Residues C303 and C348 are joined by a disulfide bond. Ca(2+)-binding residues include S360 and E361. N370 and N394 each carry an N-linked (GlcNAc...) asparagine glycan. Residues 418–438 (ILIGCLVAIILLLLLIIALML) traverse the membrane as a helical segment. Residues 439–913 (WRLHWRRLLS…FLAEDALNTV (475 aa)) are Cytoplasmic-facing. Residues 470–499 (ILINNRPGPREPPPYQEPRPRGNPPHSAPC) form a disordered region. The segment covering 479–496 (REPPPYQEPRPRGNPPHS) has biased composition (pro residues). The short motif at 481-484 (PPPY) is the PPxY motif element. A phosphotyrosine; by autocatalysis mark is found at Y484, Y513, and Y520. The Protein kinase domain maps to 610-905 (LRFKEKLGEG…PPFSQLHRFL (296 aa)). 616–624 (LGEGQFGEV) serves as a coordination point for ATP. Phosphoserine is present on S631. K655 lines the ATP pocket. At Y740 the chain carries Phosphotyrosine; by autocatalysis. D766 serves as the catalytic Proton acceptor. A phosphotyrosine; by autocatalysis mark is found at Y792, Y796, and Y797.

It belongs to the protein kinase superfamily. Tyr protein kinase family. Insulin receptor subfamily. In terms of assembly, homodimer. Interacts (via PPxY motif) with WWC1 (via WW domains) in a collagen-regulated manner. Forms a tripartite complex with WWC1 and PRKCZ, but predominantly in the absence of collagen. Interacts (tyrosine phosphorylated) with SHC1. Interacts with SRC. Interacts with MYH9. Interacts with CDH1. Interacts with PTPN11. Interacts with NCK2. In terms of processing, autophosphorylated in response to fibrillar collagen binding. Glycosylation of Asn-211, but apparently not of Asn-260 or Asn-394, prevents autophosphorylation from occurring in the absence of collagen. In terms of tissue distribution, detected in T-47D, MDA-MB-175 and HBL-100 breast carcinoma cells, A-431 epidermoid carcinoma cells, SW48 and SNU-C2B colon carcinoma cells and Hs 294T melanoma cells (at protein level). Expressed at low levels in most adult tissues and is highest in the brain, lung, placenta and kidney. Lower levels of expression are detected in melanocytes, heart, liver, skeletal muscle and pancreas. Abundant in breast carcinoma cell lines. In the colonic mucosa, expressed in epithelia but not in the connective tissue of the lamina propria. In the thyroid gland, expressed in the epithelium of the thyroid follicles. In pancreas, expressed in the islets of Langerhans cells, but not in the surrounding epithelial cells of the exocrine pancreas. In kidney, expressed in the epithelia of the distal tubules. Not expressed in connective tissue, endothelial cells, adipose tissue, muscle cells or cells of hematopoietic origin.

Its subcellular location is the cell membrane. The protein resides in the secreted. It carries out the reaction L-tyrosyl-[protein] + ATP = O-phospho-L-tyrosyl-[protein] + ADP + H(+). Inhibited by the multi-targeted cancer drugs imatinib and ponatinib. Its function is as follows. Tyrosine kinase that functions as a cell surface receptor for fibrillar collagen and regulates cell attachment to the extracellular matrix, remodeling of the extracellular matrix, cell migration, differentiation, survival and cell proliferation. Collagen binding triggers a signaling pathway that involves SRC and leads to the activation of MAP kinases. Regulates remodeling of the extracellular matrix by up-regulation of the matrix metalloproteinases MMP2, MMP7 and MMP9, and thereby facilitates cell migration and wound healing. Required for normal blastocyst implantation during pregnancy, for normal mammary gland differentiation and normal lactation. Required for normal ear morphology and normal hearing. Promotes smooth muscle cell migration, and thereby contributes to arterial wound healing. Also plays a role in tumor cell invasion. Phosphorylates PTPN11. This Homo sapiens (Human) protein is Epithelial discoidin domain-containing receptor 1 (DDR1).